The chain runs to 354 residues: Hydrophobic dipeptide epimerase (354 aa).

Substrate contacts are provided by residues Thr134, Lys159, and 159–161 (KIK). Asp189 provides a ligand contact to Mg(2+). Asn191 provides a ligand contact to substrate. Mg(2+)-binding residues include Glu215 and Asp240. Residues Lys264, 292-295 (CMAE), and 318-320 (DLD) each bind substrate.

This sequence belongs to the mandelate racemase/muconate lactonizing enzyme family. It depends on Mg(2+) as a cofactor.

In terms of biological role, catalyzes the epimerization of L-Ile-L-Tyr to L-Ile-D-Tyr (in vitro). Catalyzes the epimerization of dipeptides, with a preference for substrates with a hydrophobic or basic amino acid in the first position, followed by an aromatic residue in the second position. Has epimerase activity with L-Ile-L-Tyr, L-Val-L-Tyr and L-Arg-L-Tyr (in vitro). This is Hydrophobic dipeptide epimerase from Enterococcus faecalis (strain ATCC 700802 / V583).